Reading from the N-terminus, the 811-residue chain is Zinc finger CCCH domain-containing protein 11A (811 aa).

3 C3H1-type zinc fingers span residues 2-30 (PNQG…HCEA), 32-58 (LGNE…HMEI), and 61-87 (KRSE…HHNR). Serine 109 carries the post-translational modification Phosphoserine. Glycyl lysine isopeptide (Lys-Gly) (interchain with G-Cter in SUMO2) cross-links involve residues lysine 115 and lysine 125. Residue serine 133 is modified to Phosphoserine. Disordered stretches follow at residues 140-195 (MKVE…GLRV), 224-258 (KKMK…KENV), 286-352 (GKRK…EKVN), and 368-434 (ERAS…TCIK). Residue lysine 141 forms a Glycyl lysine isopeptide (Lys-Gly) (interchain with G-Cter in SUMO2) linkage. A phosphoserine mark is found at serine 150 and serine 172. Residues 161–176 (ADDDEDDDDQFSEEGD) are compositionally biased toward acidic residues. Residue serine 291 is modified to Phosphoserine. Composition is skewed to basic and acidic residues over residues 310–323 (KKVE…DKTP) and 368–391 (ERAS…KTDD). Phosphothreonine is present on threonine 322. Residues 363–424 (EEILLERASQ…KHRQQEAERQ (62 aa)) are a coiled coil. At serine 371 the chain carries Phosphoserine. Positions 392-403 (STSGARSSSTIR) are enriched in polar residues. Positions 418–434 (QQEAERQKSKKDTTCIK) are enriched in basic and acidic residues. A Glycyl lysine isopeptide (Lys-Gly) (interchain with G-Cter in SUMO2) cross-link involves residue lysine 479. The disordered stretch occupies residues 483 to 550 (ALRVQQSSES…KEASGETTGV (68 aa)). Low complexity predominate over residues 487–499 (QQSSESSTSSPSQ). Lysine 620 participates in a covalent cross-link: Glycyl lysine isopeptide (Lys-Gly) (interchain with G-Cter in SUMO2). Positions 716 to 769 (TVPEAENPRDSLVLPPTQSSSDSSPPEVSGPSSSQMSMKTRRLSSASTGKPQLS) are disordered. Over residues 730–749 (PPTQSSSDSSPPEVSGPSSS) the composition is skewed to low complexity. The span at 750-766 (QMSMKTRRLSSASTGKP) shows a compositional bias: polar residues.

In terms of assembly, interacts with TREX complex components THOC2, DDX39 and POLDIP3; the interactions are ATP-dependent. Interacts with PABPN1; this interaction retains ZC3H11A in nuclear speckles. Interacts with KPNA3.

It localises to the nucleus speckle. Through its association with TREX complex components, may participate in the export and post-transcriptional coordination of selected mRNA transcripts, including those required to maintain the metabolic processes in embryonic cells. Binds RNA. The polypeptide is Zinc finger CCCH domain-containing protein 11A (ZC3H11A) (Pongo abelii (Sumatran orangutan)).